The sequence spans 161 residues: Disulfide bond formation protein B (161 aa).

Topologically, residues 1 to 8 are cytoplasmic; it reads MQANSRTY. A helical transmembrane segment spans residues 9–25; sequence FLLIAIVSFAMVGAALY. Residues 26–43 lie on the Periplasmic side of the membrane; it reads MQYAENLQPCPLCIMQRF. Cysteine 35 and cysteine 38 form a disulfide bridge. The helical transmembrane segment at 44-58 threads the bilayer; the sequence is AFIGIGIFSLLAVIA. Topologically, residues 59–63 are cytoplasmic; the sequence is QNTRT. A helical membrane pass occupies residues 64–81; sequence LWQGLGMLSGVGGIAVAG. The Periplasmic portion of the chain corresponds to 82-136; that stretch reads YQVALLMNPKASCGIDPLENWVNSLPTAKLLPQVFYSDGLCTAPTPPILGLSIPA. Cysteine 94 and cysteine 122 form a disulfide bridge. Residues 137-155 traverse the membrane as a helical segment; that stretch reads WSLIWLLILTLTLAVGLIR. Residues 156 to 161 are Cytoplasmic-facing; it reads REKHFR.

The protein belongs to the DsbB family.

Its subcellular location is the cell inner membrane. In terms of biological role, required for disulfide bond formation in some periplasmic proteins. Acts by oxidizing the DsbA protein. In Cupriavidus metallidurans (strain ATCC 43123 / DSM 2839 / NBRC 102507 / CH34) (Ralstonia metallidurans), this protein is Disulfide bond formation protein B.